Consider the following 132-residue polypeptide: D-ribose pyranase (132 aa).

The active-site Proton donor is histidine 20. Substrate contacts are provided by residues aspartate 28, histidine 99, and 121–123; that span reads YSN.

It belongs to the RbsD / FucU family. RbsD subfamily. Homodecamer.

It is found in the cytoplasm. The enzyme catalyses beta-D-ribopyranose = beta-D-ribofuranose. It participates in carbohydrate metabolism; D-ribose degradation; D-ribose 5-phosphate from beta-D-ribopyranose: step 1/2. Functionally, catalyzes the interconversion of beta-pyran and beta-furan forms of D-ribose. The chain is D-ribose pyranase from Lactococcus lactis subsp. lactis (strain IL1403) (Streptococcus lactis).